The primary structure comprises 215 residues: Mite allergen Der p 7 (215 aa).

Positions 1–17 (MMKLLLIAAAAFVAVSA) are cleaved as a signal peptide. Asn-151 carries an N-linked (GlcNAc...) asparagine glycan.

This sequence belongs to the mite group 7 allergen family.

It is found in the secreted. The chain is Mite allergen Der p 7 (DERP7) from Dermatophagoides pteronyssinus (European house dust mite).